Consider the following 190-residue polypeptide: Protein LZIC (190 aa).

The stretch at 2–63 forms a coiled coil; the sequence is ASRGKTETSK…SEFNDSLKKI (62 aa).

Belongs to the CTNNBIP1 family. In terms of assembly, does not interact with CTNNB1.

The chain is Protein LZIC (Lzic) from Rattus norvegicus (Rat).